Here is a 180-residue protein sequence, read N- to C-terminus: Large ribosomal subunit protein uL5 (180 aa).

The protein belongs to the universal ribosomal protein uL5 family. Part of the 50S ribosomal subunit; part of the 5S rRNA/L5/L18/L25 subcomplex. Contacts the 5S rRNA and the P site tRNA. Forms a bridge to the 30S subunit in the 70S ribosome.

Its function is as follows. This is one of the proteins that bind and probably mediate the attachment of the 5S RNA into the large ribosomal subunit, where it forms part of the central protuberance. In the 70S ribosome it contacts protein S13 of the 30S subunit (bridge B1b), connecting the 2 subunits; this bridge is implicated in subunit movement. Contacts the P site tRNA; the 5S rRNA and some of its associated proteins might help stabilize positioning of ribosome-bound tRNAs. The chain is Large ribosomal subunit protein uL5 from Chlamydia trachomatis serovar A (strain ATCC VR-571B / DSM 19440 / HAR-13).